A 77-amino-acid chain; its full sequence is Large ribosomal subunit protein eL20 (77 aa).

The protein belongs to the eukaryotic ribosomal protein eL20 family. In terms of assembly, part of the 50S ribosomal subunit. Binds 23S rRNA.

The polypeptide is Large ribosomal subunit protein eL20 (Pyrococcus abyssi (strain GE5 / Orsay)).